The chain runs to 439 residues: Signal recognition particle 54 kDa protein (439 aa).

Residues 104-111 (GLQGSGKT), 184-188 (DTAGR), and 242-245 (SKLD) contribute to the GTP site.

Belongs to the GTP-binding SRP family. SRP54 subfamily. Part of the signal recognition particle protein translocation system, which is composed of SRP and FtsY. Archaeal SRP consists of a 7S RNA molecule of 300 nucleotides and two protein subunits: SRP54 and SRP19.

It is found in the cytoplasm. It carries out the reaction GTP + H2O = GDP + phosphate + H(+). Its function is as follows. Involved in targeting and insertion of nascent membrane proteins into the cytoplasmic membrane. Binds to the hydrophobic signal sequence of the ribosome-nascent chain (RNC) as it emerges from the ribosomes. The SRP-RNC complex is then targeted to the cytoplasmic membrane where it interacts with the SRP receptor FtsY. This Methanococcoides burtonii (strain DSM 6242 / NBRC 107633 / OCM 468 / ACE-M) protein is Signal recognition particle 54 kDa protein.